The following is a 237-amino-acid chain: Orotidine 5'-phosphate decarboxylase (237 aa).

Substrate is bound by residues Asp17, Lys39, 66-75 (DLKLHDIGNT), Thr121, Arg182, Gln191, Gly211, and Arg212. Lys68 (proton donor) is an active-site residue.

Belongs to the OMP decarboxylase family. Type 1 subfamily. Homodimer.

The catalysed reaction is orotidine 5'-phosphate + H(+) = UMP + CO2. Its pathway is pyrimidine metabolism; UMP biosynthesis via de novo pathway; UMP from orotate: step 2/2. Catalyzes the decarboxylation of orotidine 5'-monophosphate (OMP) to uridine 5'-monophosphate (UMP). This is Orotidine 5'-phosphate decarboxylase from Rhodopseudomonas palustris (strain ATCC BAA-98 / CGA009).